The sequence spans 3114 residues: Centromere protein F (3114 aa).

Positions 1–481 are interaction with SNAP25 and required for localization to the cytoplasm; sequence MSWALEEWKE…IKENELRRSM (481 aa). Residues 13 to 131 are a coiled coil; it reads PTRALQKIQE…KSELERSQQA (119 aa). Residue serine 106 is modified to Phosphoserine. 3 positions are modified to phosphothreonine: threonine 144, threonine 151, and threonine 154. The residue at position 158 (tyrosine 158) is a Phosphotyrosine. Residues 211-235 are compositionally biased toward polar residues; that stretch reads QASSSVFSWQQEKTPSHLSSNSQRT. The interval 211 to 236 is disordered; the sequence is QASSSVFSWQQEKTPSHLSSNSQRTP. Serine 242 and serine 276 each carry phosphoserine. A coiled-coil region spans residues 280-685; that stretch reads LDQLKAQNQE…SVEIRNLHNV (406 aa). A phosphoserine mark is found at serine 773, serine 783, serine 821, serine 834, serine 838, and serine 876. 2 coiled-coil regions span residues 899 to 989 and 1196 to 1244; these read VAET…LNQE and LEVK…IRGD. 3 positions are modified to phosphoserine: serine 1248, serine 1255, and serine 1259. The stretch at 1549 to 1646 forms a coiled coil; the sequence is VEELESLCEV…ELEVARLQLQ (98 aa). Phosphoserine occurs at positions 1651, 1652, and 1654. Disordered stretches follow at residues 1667–1690 and 1710–1746; these read RNESCDISKEHTSETTERTPKHDV and TETGAVKPTGECSGEQSPDTNYEPPGEDKTQGSSECI. Over residues 1669–1690 the composition is skewed to basic and acidic residues; it reads ESCDISKEHTSETTERTPKHDV. The residue at position 1726 (serine 1726) is a Phosphoserine. Threonine 1862 is modified (phosphothreonine). A phosphoserine mark is found at serine 1868 and serine 1892. Coiled-coil stretches lie at residues 1890–2078 and 2107–2891; these read NDSW…LQAR and LSST…LCSQ. Residues 2026–2351 are interaction with NDE1 and NDEL1; it reads LLKDKTHLQE…ERELEIARTN (326 aa). Tandem repeats lie at residues 2111–2290 and 2293–2472. The segment at 2111–2472 is 2 X 177 AA tandem repeats; it reads QEEVHQLRRG…ACKAKEQNLS (362 aa). Residues 2392–2829 form a sufficient for self-association region; it reads SEKENLTNEL…QAAQEKQKTG (438 aa). The interval 2392-3017 is sufficient for centromere localization; the sequence is SEKENLTNEL…ATRTSPRLAA (626 aa). A phosphoserine mark is found at serine 2416 and serine 2417. Lysine 2779 bears the N6-acetyllysine mark. The interval 2831–3017 is sufficient for nuclear localization; it reads VMDTKVDELT…ATRTSPRLAA (187 aa). The disordered stretch occupies residues 2891–2977; that stretch reads QQSKQDSRGS…AEDTEGTEFE (87 aa). Phosphoserine occurs at positions 2900, 2911, 2922, and 2936. The Nuclear localization signal signature appears at 2919-2936; the sequence is KRLSSGQNKASGKRQRSS. Position 2949 is a phosphothreonine (threonine 2949). 4 positions are modified to phosphoserine: serine 2952, serine 2998, serine 3023, and serine 3026. The disordered stretch occupies residues 3024 to 3114; sequence PLSLGKENLA…SNGSENCKVQ (91 aa). A compositionally biased stretch (polar residues) spans 3033-3045; it reads AESSKPTAGGSRS. A phosphoserine mark is found at serine 3054, serine 3079, and serine 3083. Basic and acidic residues predominate over residues 3079-3089; that stretch reads SPTDSPREGLR. Positions 3105-3114 are enriched in polar residues; the sequence is SNGSENCKVQ. Cysteine 3111 carries the cysteine methyl ester modification. Cysteine 3111 is lipidated: S-farnesyl cysteine. The propeptide at 3112 to 3114 is removed in mature form; the sequence is KVQ.

It belongs to the centromere protein F family. As to quaternary structure, interacts with and STX4 (via C-terminus). Interacts (via N-terminus) with RBL1, RBL2 and SNAP25. Self-associates. Interacts with CENP-E and BUBR1 (via C-terminus). Interacts (via C-terminus) with NDE1, NDEL1 and RB1. Hyperphosphorylated during mitosis.

It is found in the cytoplasm. The protein resides in the perinuclear region. Its subcellular location is the nucleus matrix. It localises to the chromosome. The protein localises to the centromere. It is found in the kinetochore. The protein resides in the cytoskeleton. Its subcellular location is the spindle. Its function is as follows. Required for kinetochore function and chromosome segregation in mitosis. Required for kinetochore localization of dynein, LIS1, NDE1 and NDEL1. Regulates recycling of the plasma membrane by acting as a link between recycling vesicles and the microtubule network though its association with STX4 and SNAP25. Acts as a potential inhibitor of pocket protein-mediated cellular processes during development by regulating the activity of RB proteins during cell division and proliferation. May play a regulatory or permissive role in the normal embryonic cardiomyocyte cell cycle and in promoting continued mitosis in transformed, abnormally dividing neonatal cardiomyocytes. Interaction with RB directs embryonic stem cells toward a cardiac lineage. Involved in the regulation of DNA synthesis and hence cell cycle progression, via its C-terminus. Has a potential role regulating skeletal myogenesis and in cell differentiation in embryogenesis. Involved in dendritic cell regulation of T-cell immunity against chlamydia. The polypeptide is Centromere protein F (CENPF) (Homo sapiens (Human)).